The sequence spans 224 residues: Non-structural protein V (224 aa).

The segment covering 54 to 65 (QKNIQHPTASHQ) has biased composition (polar residues). Disordered regions lie at residues 54-96 (QKNI…DPEP) and 150-171 (TEFKRGAGSGCSRPDNPRGGHR). Residues H170, C189, C193, C205, C207, C210, C214, and C217 each contribute to the Zn(2+) site.

It belongs to the paramyxoviruses V protein family. As to quaternary structure, interacts with host IFIH1/MDA5 and DHX58/LGP2. Forms with host DDB1, CUL4A, STAT1, STAT2 and STAT3 the mumps virus V-dependent complex (VDC).

Its subcellular location is the virion. The protein resides in the host cytoplasm. Plays an essential role in the inhibition of host immune response. Prevents the establishment of cellular antiviral state by blocking interferon-alpha/beta (IFN-alpha/beta) production and signaling pathway. Interacts with host IFIH1/MDA5 and DHX58/LGP2 to inhibit the transduction pathway involved in the activation of IFN-beta promoter, thus protecting the virus against cell antiviral state. Blocks the type I and II interferon signaling pathways by interacting with host STAT1, STAT2 and STAT3, and mediating their ubiquitination and subsequent proteasomal degradation. The polypeptide is Non-structural protein V (Mumps virus (strain SBL) (MuV)).